We begin with the raw amino-acid sequence, 159 residues long: Cytochrome c-type biogenesis protein CcmE (159 aa).

Residues 1-8 (MNIRRKNR) are Cytoplasmic-facing. A helical; Signal-anchor for type II membrane protein transmembrane segment spans residues 9-29 (LWIACAVLAGLALTIGLVLYA). Residues 30 to 159 (LRSNIDLFYT…PASVYKDPAS (130 aa)) lie on the Periplasmic side of the membrane. Residues histidine 130 and tyrosine 134 each contribute to the heme site. Residues 132–147 (ENYTPPEVEKAMEANH) show a composition bias toward basic and acidic residues. The tract at residues 132-159 (ENYTPPEVEKAMEANHRRPASVYKDPAS) is disordered.

Belongs to the CcmE/CycJ family.

Its subcellular location is the cell inner membrane. Its function is as follows. Heme chaperone required for the biogenesis of c-type cytochromes. Transiently binds heme delivered by CcmC and transfers the heme to apo-cytochromes in a process facilitated by CcmF and CcmH. The protein is Cytochrome c-type biogenesis protein CcmE of Shigella sonnei (strain Ss046).